A 981-amino-acid polypeptide reads, in one-letter code: Transcription factor TAC1 (981 aa).

Polar residues predominate over residues 1-29 (MDTSSSSGTHPSTFNNLTKQQELTGNDPN). Residues 1–33 (MDTSSSSGTHPSTFNNLTKQQELTGNDPNDTNR) form a disordered region. The zn(2)-C6 fungal-type DNA-binding region spans 40-68 (CDSCRRKKIKCNGSYPCGNCIQAKNTSNC). 3 disordered regions span residues 74-106 (PVRK…TFSG), 165-199 (HSNS…TSHS), and 868-902 (LRDN…SNST). Low complexity predominate over residues 165–177 (HSNSSMFNNNSLS). Residues 868 to 880 (LRDNSTNHGQNNM) show a composition bias toward polar residues. A compositionally biased stretch (low complexity) spans 881-902 (NPSPTITNNTYNSNINTGSNST).

In terms of processing, phosphorylated. Phosphorylation leads to hyperactivation.

The protein localises to the nucleus. Drugs such as farnesol and 1-dodecanol are able to hyperactivate TAC1 probably via phosphorylation by the Mediator complex. Functionally, transcriptional activator of drug-responsive genes including the ABC-type transporters CDR1 and CDR2, as well as HSP12 and RTA3. Binds the cis-acting regulatory drug-responsive elements (DREs) with the consensus sequence 5'-CGGAWATCGGATATTTTTTT-3' in the promoters of target genes. The polypeptide is Transcription factor TAC1 (Candida albicans (strain SC5314 / ATCC MYA-2876) (Yeast)).